A 374-amino-acid chain; its full sequence is Ferroptosis suppressor protein 1 (374 aa).

Gly-2 carries N-myristoyl glycine lipidation. A helical membrane pass occupies residues Val-13–Pro-35. Residues Gly-17–Ala-21, Arg-53, and Val-81 each bind 6-hydroxy-FAD. At Lys-167 the chain carries N6-acetyllysine. 6-hydroxy-FAD is bound at residue Asp-285.

Belongs to the FAD-dependent oxidoreductase family. 6-hydroxy-FAD serves as cofactor. N-myristoylation at Gly-2 mediates the recruitment to lipid droplets and plasma membrane. In terms of processing, acetylation at Lys-167 prevents AIFM2 ubiquitination and degradation, thereby inhibiting ferroptosis. KAT2B mediates acetylation at Lys-167, while HDAC3 removes it. Post-translationally, ubiquitinated. AIFM2 undergoes 'Lys-29'-ubiquitination and proteasomal degradation, which is inhibited by acetylation at Lys-167.

Its subcellular location is the lipid droplet. It is found in the cell membrane. The protein localises to the cytoplasm. The protein resides in the mitochondrion membrane. It localises to the nucleus. The catalysed reaction is ubiquinone-10 + NADH + H(+) = ubiquinol-10 + NAD(+). It catalyses the reaction phylloquinone + NADH + H(+) = phylloquinol + NAD(+). It carries out the reaction menaquinone-4 + NADH + H(+) = menaquinol-4 + NAD(+). The enzyme catalyses menadione + NADH + H(+) = menadiol + NAD(+). The modification by 4-hydroxy-2-nonenal (HNE) adduction in mitochondria results in loss of the oxidoreductase activity and activation of a novel function in mitochondrial oxidative stress signaling. In terms of biological role, a NAD(P)H-dependent oxidoreductase that acts as a key inhibitor of ferroptosis. At the plasma membrane, catalyzes reduction of coenzyme Q/ubiquinone-10 to ubiquinol-10, a lipophilic radical-trapping antioxidant that prevents lipid oxidative damage and consequently ferroptosis. Acts in parallel to GPX4 to suppress phospholipid peroxidation and ferroptosis. This anti-ferroptotic function is independent of cellular glutathione levels. Also acts as a potent radical-trapping antioxidant by mediating warfarin-resistant vitamin K reduction in the canonical vitamin K cycle: catalyzes NAD(P)H-dependent reduction of vitamin K (phylloquinone, menaquinone-4 and menadione) to hydroquinone forms. Hydroquinones act as potent radical-trapping antioxidants inhibitor of phospholipid peroxidation and ferroptosis. May play a role in mitochondrial stress signaling. Upon oxidative stress, associates with the lipid peroxidation end product 4-hydroxy-2-nonenal (HNE) forming a lipid adduct devoid of oxidoreductase activity, which then translocates from mitochondria into the nucleus triggering DNA damage and cell death. This chain is Ferroptosis suppressor protein 1 (aifm2), found in Xenopus tropicalis (Western clawed frog).